A 234-amino-acid chain; its full sequence is Glycerol-3-phosphate acyltransferase (234 aa).

A run of 6 helical transmembrane segments spans residues 4–24 (LLAILVVSYIVGSIPTSLIAG), 56–76 (TVTLIDIIKGVVAAVSVVAFF), 90–110 (VALRLLAGMSAVIGHVFTVFA), 122–142 (AGMLIGIAPVSMLMVIGVFLL), 152–172 (VASILAAIAFPLIIAIRKYLF), and 191–211 (FHDSLDYHLIIFGLIVAIAII).

It belongs to the PlsY family. Probably interacts with PlsX.

The protein resides in the cell inner membrane. It catalyses the reaction an acyl phosphate + sn-glycerol 3-phosphate = a 1-acyl-sn-glycero-3-phosphate + phosphate. Its pathway is lipid metabolism; phospholipid metabolism. In terms of biological role, catalyzes the transfer of an acyl group from acyl-phosphate (acyl-PO(4)) to glycerol-3-phosphate (G3P) to form lysophosphatidic acid (LPA). This enzyme utilizes acyl-phosphate as fatty acyl donor, but not acyl-CoA or acyl-ACP. This chain is Glycerol-3-phosphate acyltransferase, found in Chlorobium chlorochromatii (strain CaD3).